The primary structure comprises 155 residues: Cell division protein SepF (155 aa).

Over residues 22 to 46 the composition is skewed to basic and acidic residues; sequence RYVEEPEQRDERPALEKGRAPKEKQ. The segment at 22-54 is disordered; the sequence is RYVEEPEQRDERPALEKGRAPKEKQTAGMEQNQ.

Belongs to the SepF family. Homodimer. Interacts with FtsZ.

The protein resides in the cytoplasm. Cell division protein that is part of the divisome complex and is recruited early to the Z-ring. Probably stimulates Z-ring formation, perhaps through the cross-linking of FtsZ protofilaments. Its function overlaps with FtsA. The chain is Cell division protein SepF from Shouchella clausii (strain KSM-K16) (Alkalihalobacillus clausii).